Consider the following 456-residue polypeptide: Bifunctional protein GlmU (456 aa).

Residues 1 to 229 (MLNNAMSVVI…LSEVEGVNNR (229 aa)) are pyrophosphorylase. UDP-N-acetyl-alpha-D-glucosamine-binding positions include 11 to 14 (LAAG), lysine 25, glutamine 76, 81 to 82 (GT), 103 to 105 (YGD), glycine 140, glutamate 154, asparagine 169, and asparagine 227. Residue aspartate 105 participates in Mg(2+) binding. Asparagine 227 contacts Mg(2+). The tract at residues 230-250 (LQLSRLERVYQSEQAEKLLLA) is linker. The N-acetyltransferase stretch occupies residues 251-456 (GVMLRDPARF…EGWRRPVKKK (206 aa)). 2 residues coordinate UDP-N-acetyl-alpha-D-glucosamine: arginine 333 and lysine 351. The Proton acceptor role is filled by histidine 363. Positions 366 and 377 each coordinate UDP-N-acetyl-alpha-D-glucosamine. Residues alanine 380, 386 to 387 (NY), serine 405, alanine 423, and arginine 440 each bind acetyl-CoA.

It in the N-terminal section; belongs to the N-acetylglucosamine-1-phosphate uridyltransferase family. In the C-terminal section; belongs to the transferase hexapeptide repeat family. As to quaternary structure, homotrimer. It depends on Mg(2+) as a cofactor.

Its subcellular location is the cytoplasm. It carries out the reaction alpha-D-glucosamine 1-phosphate + acetyl-CoA = N-acetyl-alpha-D-glucosamine 1-phosphate + CoA + H(+). The enzyme catalyses N-acetyl-alpha-D-glucosamine 1-phosphate + UTP + H(+) = UDP-N-acetyl-alpha-D-glucosamine + diphosphate. It functions in the pathway nucleotide-sugar biosynthesis; UDP-N-acetyl-alpha-D-glucosamine biosynthesis; N-acetyl-alpha-D-glucosamine 1-phosphate from alpha-D-glucosamine 6-phosphate (route II): step 2/2. The protein operates within nucleotide-sugar biosynthesis; UDP-N-acetyl-alpha-D-glucosamine biosynthesis; UDP-N-acetyl-alpha-D-glucosamine from N-acetyl-alpha-D-glucosamine 1-phosphate: step 1/1. Its pathway is bacterial outer membrane biogenesis; LPS lipid A biosynthesis. In terms of biological role, catalyzes the last two sequential reactions in the de novo biosynthetic pathway for UDP-N-acetylglucosamine (UDP-GlcNAc). The C-terminal domain catalyzes the transfer of acetyl group from acetyl coenzyme A to glucosamine-1-phosphate (GlcN-1-P) to produce N-acetylglucosamine-1-phosphate (GlcNAc-1-P), which is converted into UDP-GlcNAc by the transfer of uridine 5-monophosphate (from uridine 5-triphosphate), a reaction catalyzed by the N-terminal domain. The sequence is that of Bifunctional protein GlmU from Escherichia coli (strain 55989 / EAEC).